Reading from the N-terminus, the 122-residue chain is Small ribosomal subunit protein uS13 (122 aa).

Positions 93–122 (RRGLPVRGQRTKTNARTRKGPKKTIAGKKK) are disordered.

It belongs to the universal ribosomal protein uS13 family. In terms of assembly, part of the 30S ribosomal subunit. Forms a loose heterodimer with protein S19. Forms two bridges to the 50S subunit in the 70S ribosome.

Its function is as follows. Located at the top of the head of the 30S subunit, it contacts several helices of the 16S rRNA. In the 70S ribosome it contacts the 23S rRNA (bridge B1a) and protein L5 of the 50S subunit (bridge B1b), connecting the 2 subunits; these bridges are implicated in subunit movement. Contacts the tRNAs in the A and P-sites. The sequence is that of Small ribosomal subunit protein uS13 from Corynebacterium efficiens (strain DSM 44549 / YS-314 / AJ 12310 / JCM 11189 / NBRC 100395).